The following is a 170-amino-acid chain: ATP synthase subunit b (170 aa).

Residues 22-41 (ILNWAVVVFGLYKFLPGFLG) form a helical membrane-spanning segment. The interval 72–98 (AKKDLSSAEEKASQIKADSLKRSESIR) is disordered.

The protein belongs to the ATPase B chain family. F-type ATPases have 2 components, F(1) - the catalytic core - and F(0) - the membrane proton channel. F(1) has five subunits: alpha(3), beta(3), gamma(1), delta(1), epsilon(1). F(0) has four main subunits: a(1), b(1), b'(1) and c(10-14). The alpha and beta chains form an alternating ring which encloses part of the gamma chain. F(1) is attached to F(0) by a central stalk formed by the gamma and epsilon chains, while a peripheral stalk is formed by the delta, b and b' chains.

The protein resides in the cellular thylakoid membrane. Its function is as follows. F(1)F(0) ATP synthase produces ATP from ADP in the presence of a proton or sodium gradient. F-type ATPases consist of two structural domains, F(1) containing the extramembraneous catalytic core and F(0) containing the membrane proton channel, linked together by a central stalk and a peripheral stalk. During catalysis, ATP synthesis in the catalytic domain of F(1) is coupled via a rotary mechanism of the central stalk subunits to proton translocation. Component of the F(0) channel, it forms part of the peripheral stalk, linking F(1) to F(0). This Prochlorococcus marinus (strain MIT 9301) protein is ATP synthase subunit b.